The sequence spans 212 residues: External core antigen (212 aa).

Residues 1-19 (MQLFHLCLIISCSCPTVQA) form the signal peptide. Positions 25 to 27 (GWL) are HBEAG. The disordered stretch occupies residues 172 to 212 (LPETTVVRRRGRSPRRRTPSPRRRRSKSPRRRRSQSRESQC). The span at 178 to 205 (VRRRGRSPRRRTPSPRRRRSKSPRRRRS) shows a compositional bias: basic residues. One copy of the 1; half-length repeat lies at 184 to 189 (SPRRRT). The 3 X 7 AA repeats of S-P-R-R-R-R-S stretch occupies residues 184 to 205 (SPRRRTPSPRRRRSKSPRRRRS). The propeptide occupies 184–212 (SPRRRTPSPRRRRSKSPRRRRSQSRESQC). Repeat copies occupy residues 191–197 (SPRRRRS) and 199–205 (SPRRRRS).

The protein belongs to the orthohepadnavirus precore antigen family. Homodimerizes. Phosphorylated. In terms of processing, cleaved by host furin.

It is found in the secreted. The protein localises to the host nucleus. Its function is as follows. May regulate immune response to the intracellular capsid in acting as a T-cell tolerogen, by having an immunoregulatory effect which prevents destruction of infected cells by cytotoxic T-cells. This immune regulation may predispose to chronicity during perinatal infections and prevent severe liver injury during adult infections. The polypeptide is External core antigen (Hepatitis B virus genotype C subtype adr (isolate Japan/Nishioka/1983) (HBV-C)).